The primary structure comprises 292 residues: tRNA pseudouridine synthase B (292 aa).

The active-site Nucleophile is Asp-38.

The protein belongs to the pseudouridine synthase TruB family. Type 1 subfamily.

The catalysed reaction is uridine(55) in tRNA = pseudouridine(55) in tRNA. In terms of biological role, responsible for synthesis of pseudouridine from uracil-55 in the psi GC loop of transfer RNAs. The polypeptide is tRNA pseudouridine synthase B (Gloeobacter violaceus (strain ATCC 29082 / PCC 7421)).